A 289-amino-acid chain; its full sequence is Agmatinase (289 aa).

His112, Asp135, His137, Asp139, Asp216, and Asp218 together coordinate Mn(2+).

It belongs to the arginase family. Agmatinase subfamily. Mn(2+) serves as cofactor.

The enzyme catalyses agmatine + H2O = urea + putrescine. It functions in the pathway amine and polyamine biosynthesis; putrescine biosynthesis via agmatine pathway; putrescine from agmatine: step 1/1. Its function is as follows. Catalyzes the formation of putrescine from agmatine. This Halalkalibacterium halodurans (strain ATCC BAA-125 / DSM 18197 / FERM 7344 / JCM 9153 / C-125) (Bacillus halodurans) protein is Agmatinase (speB).